The chain runs to 274 residues: Phosphoribosylaminoimidazole-succinocarboxamide synthase (274 aa).

It belongs to the SAICAR synthetase family.

The enzyme catalyses 5-amino-1-(5-phospho-D-ribosyl)imidazole-4-carboxylate + L-aspartate + ATP = (2S)-2-[5-amino-1-(5-phospho-beta-D-ribosyl)imidazole-4-carboxamido]succinate + ADP + phosphate + 2 H(+). It functions in the pathway purine metabolism; IMP biosynthesis via de novo pathway; 5-amino-1-(5-phospho-D-ribosyl)imidazole-4-carboxamide from 5-amino-1-(5-phospho-D-ribosyl)imidazole-4-carboxylate: step 1/2. This is Phosphoribosylaminoimidazole-succinocarboxamide synthase from Nitrosopumilus maritimus (strain SCM1).